Reading from the N-terminus, the 128-residue chain is Large ribosomal subunit protein uL22 (128 aa).

The segment at M1–S22 is disordered. Residues I9–P21 show a composition bias toward basic and acidic residues.

Belongs to the universal ribosomal protein uL22 family. Part of the 50S ribosomal subunit.

This protein binds specifically to 23S rRNA; its binding is stimulated by other ribosomal proteins, e.g. L4, L17, and L20. It is important during the early stages of 50S assembly. It makes multiple contacts with different domains of the 23S rRNA in the assembled 50S subunit and ribosome. In terms of biological role, the globular domain of the protein is located near the polypeptide exit tunnel on the outside of the subunit, while an extended beta-hairpin is found that lines the wall of the exit tunnel in the center of the 70S ribosome. The polypeptide is Large ribosomal subunit protein uL22 (Lachnoclostridium phytofermentans (strain ATCC 700394 / DSM 18823 / ISDg) (Clostridium phytofermentans)).